Consider the following 46-residue polypeptide: uncharacterized protein (46 aa).

Residues 12-34 form a helical membrane-spanning segment; that stretch reads HFNHFVIALSFIYGLTELGYLLL.

The protein resides in the cell membrane. This is an uncharacterized protein from Bacillus subtilis (strain 168).